Consider the following 161-residue polypeptide: Regulator of ribonuclease activity A (161 aa).

The protein belongs to the RraA family. In terms of assembly, homotrimer. Binds to both RNA-binding sites in the C-terminal region of Rne and to RhlB.

Its subcellular location is the cytoplasm. Its function is as follows. Globally modulates RNA abundance by binding to RNase E (Rne) and regulating its endonucleolytic activity. Can modulate Rne action in a substrate-dependent manner by altering the composition of the degradosome. Modulates RNA-binding and helicase activities of the degradosome. This Shewanella oneidensis (strain ATCC 700550 / JCM 31522 / CIP 106686 / LMG 19005 / NCIMB 14063 / MR-1) protein is Regulator of ribonuclease activity A.